The sequence spans 213 residues: MOB kinase activator-like 1 homolog A (213 aa).

Positions 77, 82, 159, and 164 each coordinate Zn(2+).

The protein belongs to the MOB1/phocein family.

This is MOB kinase activator-like 1 homolog A (mobA) from Dictyostelium discoideum (Social amoeba).